The following is a 319-amino-acid chain: Probable metallo-hydrolase YqjP (319 aa).

The Zn(2+) site is built by His67, His69, Asp71, His72, His165, Asp184, and His231.

It belongs to the metallo-beta-lactamase superfamily. The cofactor is Zn(2+).

The chain is Probable metallo-hydrolase YqjP (yqjP) from Bacillus subtilis (strain 168).